The primary structure comprises 226 residues: 3-dehydroquinate dehydratase (226 aa).

Residues S21, E42–R44, and R70 contribute to the 3-dehydroquinate site. The Proton donor/acceptor role is filled by H124. The active-site Schiff-base intermediate with substrate is K149. Positions 187, 206, and 210 each coordinate 3-dehydroquinate.

The protein belongs to the type-I 3-dehydroquinase family. As to quaternary structure, homodimer.

The catalysed reaction is 3-dehydroquinate = 3-dehydroshikimate + H2O. The protein operates within metabolic intermediate biosynthesis; chorismate biosynthesis; chorismate from D-erythrose 4-phosphate and phosphoenolpyruvate: step 3/7. Its function is as follows. Involved in the third step of the chorismate pathway, which leads to the biosynthesis of aromatic amino acids. Catalyzes the cis-dehydration of 3-dehydroquinate (DHQ) and introduces the first double bond of the aromatic ring to yield 3-dehydroshikimate. This chain is 3-dehydroquinate dehydratase, found in Methanothrix thermoacetophila (strain DSM 6194 / JCM 14653 / NBRC 101360 / PT) (Methanosaeta thermophila).